The following is an 836-amino-acid chain: MEFLKSGIKTVLGSTEPGQQPSAAETVEKLVDRVYSSTLLEDRRDACRALKALSRKYRIEVGAQGMPPLVQVLQNDGQDAEIISYALDTLCNVVTSEEFDEEADNPTVSVNVGEQFTEMFIKTPEHVTLVMGYLDEYDFRVRRAAIQLITSLISNKTRELQDLILVSPMGVSKLMDLLTDSREVIRNDVLLLLIELTKGNSNIQKIVAFENAFDRLFEIVREEGCSDGGIVVEDCLILLLNLLKNNSSNQQFFKEGSYIQRLSPMFELSQDAEEVGWSPQKVSNFHCLLQVVRALVTPSNQQQVVAACQRVMQKSRLLHALCEILMSSGVPADILTETINAVAEVVRGDRDNQDELGRVMAPSSPPRPAIVVLLMSMINEKQLLALRCAVLYCFECFLYRNADGQRAVVQTLLPSSASDVSALSTGQLLCTGLFSTDALANWFSAVALMHSLVENVALKEELLRVLLATPGGQKPITLLEQCTNLMQQERYRLQSKVGLLMLLSLWLAHCPGAVKALLETQGTMAYLTAQLCSNEHDEREFLVQGMCAFLMGLCIQFNDNSLPGQKREDISQLIIKRIGQESFCSKLAEVSRHEAYSRACKQAQIRAKSAGELLLDFEYCKLYKGLEALIAKLVSGFDVDGIELTELTLSSEASALVSQYKGIIRGMDAQIQALQQSSKELEQENAELKEKLGEEQSLKAQLLDQNTLLKAQLGASTGQVQSAQGAEATPPNEEELNAARYQANMYFAENIRLTKELETLRQQLSAEKQSADAAQDSLAAMQKDQEDLLELLADQEAKLTRYEEAGSTNTLPTSNVAPSVPAAGGGSPIPSGTASR.

The segment at 1–22 is disordered; it reads MEFLKSGIKTVLGSTEPGQQPS. A compositionally biased stretch (polar residues) spans 12–22; sequence LGSTEPGQQPS. ARM repeat units lie at residues 24-64, 65-124, 126-166, 169-210, 211-256, 316-359, 368-413, 424-463, 477-518, 523-577, and 579-636; these read AETV…VGAQ, GMPP…IKTP, HVTL…LILV, MGVS…VAFE, NAFD…FKEG, RLLH…LGRV, PAIV…QTLL, STGQ…EELL, TLLE…KALL, TMAY…IIKR, and GQES…LVSG. 2 coiled-coil regions span residues 663 to 707 and 744 to 806; these read IIRG…DQNT and NMYF…EEAG. Residues 803–836 form a disordered region; that stretch reads EEAGSTNTLPTSNVAPSVPAAGGGSPIPSGTASR. Residues 806-816 are compositionally biased toward polar residues; it reads GSTNTLPTSNV. The span at 817 to 836 shows a compositional bias: low complexity; it reads APSVPAAGGGSPIPSGTASR.

The protein belongs to the VDP/USO1/EDE1 family.

The protein localises to the cytoplasm. It localises to the golgi apparatus. Its subcellular location is the golgi stack. The protein resides in the golgi stack membrane. It is found in the endoplasmic reticulum. The protein localises to the endoplasmic reticulum membrane. In terms of biological role, essential for maintaining the architecture of the Golgi stacks and for normal organization of the transitional endoplasmic reticulum (tER). Required for both the formation of the Golgi stacks and the maintenance of the individual cisternae. The sequence is that of General vesicular transport factor p115 from Drosophila melanogaster (Fruit fly).